A 1260-amino-acid chain; its full sequence is Myosin-1 (1260 aa).

A Myosin motor domain is found at V34–D713. An ATP-binding site is contributed by G127–T134. A Phosphoserine modification is found at S355. Residues S402–S484 are actin-binding. IQ domains lie at Y717 to S737 and A738 to R763. The TH1 domain occupies K769–A959. Polar residues-rich tracts occupy residues S948–Q963 and T972–Y988. The interval S948 to P1106 is disordered. Low complexity predominate over residues G989–H1013. Positions Q1030 to R1064 are enriched in polar residues. Residues Q1065–A1082 show a composition bias toward low complexity. The span at A1092–T1101 shows a compositional bias: pro residues. Residues Q1103 to E1165 enclose the SH3 domain.

The protein belongs to the TRAFAC class myosin-kinesin ATPase superfamily. Myosin family. Phosphorylation of the TEDS site (Ser-355) is required for the polarization of the actin cytoskeleton. Phosphorylation probably activates the myosin-I ATPase activity.

Its subcellular location is the cytoplasm. The protein localises to the cytoskeleton. It localises to the actin patch. Functionally, type-I myosin implicated in the organization of the actin cytoskeleton. Required for proper actin cytoskeleton polarization. At the cell cortex, assembles in patch-like structures together with proteins from the actin-polymerizing machinery and promotes actin assembly. Functions as actin nucleation-promoting factor (NPF) for the Arp2/3 complex. The chain is Myosin-1 (MYO1) from Kluyveromyces lactis (strain ATCC 8585 / CBS 2359 / DSM 70799 / NBRC 1267 / NRRL Y-1140 / WM37) (Yeast).